Consider the following 1764-residue polypeptide: Cilia- and flagella-associated protein 44 (1764 aa).

WD repeat units lie at residues glycine 115 to arginine 157, alanine 160 to lysine 199, glycine 208 to threonine 248, cysteine 255 to proline 294, histidine 361 to glutamate 400, alanine 454 to threonine 493, and valine 495 to leucine 534. Positions glutamine 570–leucine 654 are disordered. Over residues lysine 575–glycine 584 the composition is skewed to basic residues. Basic and acidic residues-rich tracts occupy residues lysine 585 to glycine 596 and glycine 604 to alanine 628. The span at glutamate 629–aspartate 641 shows a compositional bias: acidic residues. WD repeat units lie at residues serine 649 to alanine 692, alanine 707 to methionine 752, and glutamine 753 to proline 791. A coiled-coil region spans residues tyrosine 821–leucine 850. Disordered regions lie at residues alanine 972–alanine 1003 and lysine 1426–glycine 1468. Over residues glycine 1434 to glutamate 1462 the composition is skewed to acidic residues. 3 coiled-coil regions span residues aspartate 1479–glutamine 1517, leucine 1567–isoleucine 1674, and glutamate 1729–lysine 1758.

The protein belongs to the CFAP44 family.

The protein resides in the cell projection. It is found in the cilium. Its subcellular location is the flagellum. It localises to the cytoplasm. The protein localises to the cytoskeleton. The protein resides in the flagellum axoneme. In terms of biological role, flagellar protein involved in sperm flagellum axoneme organization and function. This Chlamydomonas reinhardtii (Chlamydomonas smithii) protein is Cilia- and flagella-associated protein 44.